A 464-amino-acid polypeptide reads, in one-letter code: Siroheme synthase (464 aa).

Residues 1-203 (MEFLPLFHNL…GQGDEAERLL (203 aa)) form a precorrin-2 dehydrogenase /sirohydrochlorin ferrochelatase region. NAD(+) is bound by residues 22 to 23 (EI) and 43 to 44 (PQ). The residue at position 128 (serine 128) is a Phosphoserine. Residues 216-464 (GEVYLVGAGP…KWFEGAQSQV (249 aa)) form a uroporphyrinogen-III C-methyltransferase region. An S-adenosyl-L-methionine-binding site is contributed by proline 225. Aspartate 248 functions as the Proton acceptor in the catalytic mechanism. Lysine 270 serves as the catalytic Proton donor. S-adenosyl-L-methionine contacts are provided by residues 301 to 303 (GGD), isoleucine 306, 331 to 332 (TA), methionine 383, and glycine 412.

The protein in the N-terminal section; belongs to the precorrin-2 dehydrogenase / sirohydrochlorin ferrochelatase family. It in the C-terminal section; belongs to the precorrin methyltransferase family.

It catalyses the reaction uroporphyrinogen III + 2 S-adenosyl-L-methionine = precorrin-2 + 2 S-adenosyl-L-homocysteine + H(+). The catalysed reaction is precorrin-2 + NAD(+) = sirohydrochlorin + NADH + 2 H(+). It carries out the reaction siroheme + 2 H(+) = sirohydrochlorin + Fe(2+). It functions in the pathway cofactor biosynthesis; adenosylcobalamin biosynthesis; precorrin-2 from uroporphyrinogen III: step 1/1. It participates in cofactor biosynthesis; adenosylcobalamin biosynthesis; sirohydrochlorin from precorrin-2: step 1/1. The protein operates within porphyrin-containing compound metabolism; siroheme biosynthesis; precorrin-2 from uroporphyrinogen III: step 1/1. Its pathway is porphyrin-containing compound metabolism; siroheme biosynthesis; siroheme from sirohydrochlorin: step 1/1. It functions in the pathway porphyrin-containing compound metabolism; siroheme biosynthesis; sirohydrochlorin from precorrin-2: step 1/1. In terms of biological role, multifunctional enzyme that catalyzes the SAM-dependent methylations of uroporphyrinogen III at position C-2 and C-7 to form precorrin-2 via precorrin-1. Then it catalyzes the NAD-dependent ring dehydrogenation of precorrin-2 to yield sirohydrochlorin. Finally, it catalyzes the ferrochelation of sirohydrochlorin to yield siroheme. This is Siroheme synthase from Pseudomonas fluorescens (strain SBW25).